Consider the following 352-residue polypeptide: Protein RecA (352 aa).

Gly68–Thr75 is an ATP binding site.

This sequence belongs to the RecA family.

The protein resides in the cytoplasm. Can catalyze the hydrolysis of ATP in the presence of single-stranded DNA, the ATP-dependent uptake of single-stranded DNA by duplex DNA, and the ATP-dependent hybridization of homologous single-stranded DNAs. It interacts with LexA causing its activation and leading to its autocatalytic cleavage. The sequence is that of Protein RecA from Clostridium perfringens (strain ATCC 13124 / DSM 756 / JCM 1290 / NCIMB 6125 / NCTC 8237 / Type A).